Reading from the N-terminus, the 142-residue chain is uncharacterized protein (142 aa).

This is an uncharacterized protein from Caenorhabditis elegans.